Consider the following 875-residue polypeptide: Alanine--tRNA ligase (875 aa).

Zn(2+) is bound by residues H564, H568, C666, and H670.

Belongs to the class-II aminoacyl-tRNA synthetase family. As to quaternary structure, homotetramer. The cofactor is Zn(2+).

The protein localises to the cytoplasm. The catalysed reaction is tRNA(Ala) + L-alanine + ATP = L-alanyl-tRNA(Ala) + AMP + diphosphate. Functionally, catalyzes the attachment of alanine to tRNA(Ala) in a two-step reaction: alanine is first activated by ATP to form Ala-AMP and then transferred to the acceptor end of tRNA(Ala). Also edits incorrectly charged Ser-tRNA(Ala) and Gly-tRNA(Ala) via its editing domain. This chain is Alanine--tRNA ligase, found in Enterobacter sp. (strain 638).